Here is a 118-residue protein sequence, read N- to C-terminus: Large ribosomal subunit protein bL19 (118 aa).

This sequence belongs to the bacterial ribosomal protein bL19 family.

Its function is as follows. This protein is located at the 30S-50S ribosomal subunit interface and may play a role in the structure and function of the aminoacyl-tRNA binding site. This Hahella chejuensis (strain KCTC 2396) protein is Large ribosomal subunit protein bL19.